The primary structure comprises 103 residues: Cell division topological specificity factor (103 aa).

Belongs to the MinE family.

Functionally, prevents the cell division inhibition by proteins MinC and MinD at internal division sites while permitting inhibition at polar sites. This ensures cell division at the proper site by restricting the formation of a division septum at the midpoint of the long axis of the cell. This chain is Cell division topological specificity factor, found in Prochlorococcus marinus (strain MIT 9211).